A 338-amino-acid chain; its full sequence is MTRF1L release factor glutamine methyltransferase (338 aa).

Residues 167–171, Asp-190, Trp-225, and Asn-239 contribute to the S-adenosyl-L-methionine site; that span reads GCGSG. A substrate-binding site is contributed by 239–242; that stretch reads NPPY.

The protein belongs to the protein N5-glutamine methyltransferase family.

Its subcellular location is the mitochondrion. The catalysed reaction is L-glutaminyl-[peptide chain release factor] + S-adenosyl-L-methionine = N(5)-methyl-L-glutaminyl-[peptide chain release factor] + S-adenosyl-L-homocysteine + H(+). Its function is as follows. N5-glutamine methyltransferase responsible for the methylation of the glutamine residue in the universally conserved GGQ motif of the mitochondrial translation release factors MTRF1, MTRF1L, MRPL58/ICT1 and MTRFR. The chain is MTRF1L release factor glutamine methyltransferase (HEMK1) from Homo sapiens (Human).